The sequence spans 352 residues: Inhibin beta C chain (352 aa).

The signal sequence occupies residues 1–18 (MTSSLLLAFLLLAPTTVA). Positions 19–236 (TPRAGGQCPA…VGGKHQIHRR (218 aa)) are excised as a propeptide. 3 N-linked (GlcNAc...) asparagine glycosylation sites follow: Asn-110, Asn-143, and Asn-161. Cystine bridges form between Cys-240–Cys-248, Cys-247–Cys-317, Cys-276–Cys-349, and Cys-280–Cys-351.

It belongs to the TGF-beta family. As to quaternary structure, homodimeric or heterodimeric through association with alpha and beta subunits, linked by one or more disulfide bonds. Inhibins are heterodimers of one alpha and one beta subunit. Activins are homo- or heterodimers of beta subunits only. As to expression, expressed in benign prostatic hyperplasia.

It is found in the secreted. Functionally, inhibins and activins inhibit and activate, respectively, the secretion of follitropin by the pituitary gland. Inhibins/activins are involved in regulating a number of diverse functions such as hypothalamic and pituitary hormone secretion, gonadal hormone secretion, germ cell development and maturation, erythroid differentiation, insulin secretion, nerve cell survival, embryonic axial development or bone growth, depending on their subunit composition. Inhibins appear to oppose the functions of activins. The protein is Inhibin beta C chain (INHBC) of Homo sapiens (Human).